A 122-amino-acid polypeptide reads, in one-letter code: Small ribosomal subunit protein uS13 (122 aa).

Residues 95-122 are disordered; the sequence is GLPVRGQRTHTNARTRKGKAKPIAGKKK.

It belongs to the universal ribosomal protein uS13 family. Part of the 30S ribosomal subunit. Forms a loose heterodimer with protein S19. Forms two bridges to the 50S subunit in the 70S ribosome.

Located at the top of the head of the 30S subunit, it contacts several helices of the 16S rRNA. In the 70S ribosome it contacts the 23S rRNA (bridge B1a) and protein L5 of the 50S subunit (bridge B1b), connecting the 2 subunits; these bridges are implicated in subunit movement. Contacts the tRNAs in the A and P-sites. The protein is Small ribosomal subunit protein uS13 of Sphingopyxis alaskensis (strain DSM 13593 / LMG 18877 / RB2256) (Sphingomonas alaskensis).